Consider the following 28-residue polypeptide: Cysteine-rich venom protein asurin-2 (28 aa).

Basic and acidic residues predominate over residues S1–N15. The tract at residues S1–M28 is disordered. Over residues L17–M28 the composition is skewed to polar residues.

Belongs to the CRISP family. Post-translationally, contains 8 disulfide bonds. Expressed by the venom gland.

It is found in the secreted. Functionally, blocks contraction of smooth muscle elicited by high potassium-induced depolarization, but does not block caffeine-stimulated contraction. May target voltage-gated calcium channels on smooth muscle. This chain is Cysteine-rich venom protein asurin-2, found in Austrelaps superbus (Lowland copperhead snake).